A 132-amino-acid chain; its full sequence is Small ribosomal subunit protein uS8 (132 aa).

Belongs to the universal ribosomal protein uS8 family. Part of the 30S ribosomal subunit. Contacts proteins S5 and S12.

Its function is as follows. One of the primary rRNA binding proteins, it binds directly to 16S rRNA central domain where it helps coordinate assembly of the platform of the 30S subunit. The chain is Small ribosomal subunit protein uS8 from Clostridium tetani (strain Massachusetts / E88).